Consider the following 622-residue polypeptide: Lamin Dm0 (622 aa).

The segment at 1 to 50 is disordered; it reads MSSKSRRAGTATPQPGNTSTPRPPSAGPQPPPPSTHSQTASSPLSPTRHS. An N-acetylserine modification is found at Ser-2. Residues 2-56 form a head region; the sequence is SSKSRRAGTATPQPGNTSTPRPPSAGPQPPPPSTHSQTASSPLSPTRHSRVAEKV. Phosphothreonine occurs at positions 10, 12, and 20. The span at 21 to 34 shows a compositional bias: pro residues; the sequence is PRPPSAGPQPPPPS. Ser-25 and Ser-34 each carry phosphoserine. Phosphothreonine is present on Thr-39. Phosphoserine occurs at positions 41, 42, and 45. Residue Thr-47 is modified to Phosphothreonine. The 357-residue stretch at 54-410 folds into the IF rod domain; the sequence is EKVELQNLND…KLLVGEEARL (357 aa). Positions 55–91 are coil 1A; sequence KVELQNLNDRLATYIDRVRNLETENSRLTIEVQTTRD. Residues 92-103 form a linker 1 region; sequence TVTRETTNIKNI. Residues 104-241 are coil 1B; it reads FEAELLETRR…QIHSQEINES (138 aa). The residue at position 235 (Ser-235) is a Phosphoserine. Positions 242–265 are linker 2; it reads RRIKQTEYSEIDGRLSSEYDAKLK. Tyr-249 bears the Phosphotyrosine mark. A phosphoserine mark is found at Ser-250 and Ser-311. The segment at 266–408 is coil 2; that stretch reads QSLQELRAQY…YDKLLVGEEA (143 aa). Residues 409 to 619 form a tail region; the sequence is RLNITPATNT…GDPQQSNEKC (211 aa). Residues Thr-413 and Thr-435 each carry the phosphothreonine modification. Residues 429-440 are compositionally biased toward polar residues; sequence RNSTRATPSRRT. Residues 429–448 are disordered; sequence RNSTRATPSRRTPSAAVKRK. A Phosphoserine modification is found at Ser-442. A Nuclear localization signal motif is present at residues 446–451; that stretch reads KRKRAV. A phosphoserine mark is found at Ser-455 and Ser-459. The region spanning 461–588 is the LTD domain; that stretch reads ADYYVSASAK…RIVSQHTSSS (128 aa). Ser-595 is subject to Phosphoserine. At Thr-597 the chain carries Phosphothreonine. The tract at residues 603–622 is disordered; the sequence is EQLYHQQGDPQQSNEKCAIM. A compositionally biased stretch (polar residues) spans 605–622; the sequence is LYHQQGDPQQSNEKCAIM. Ser-615 is modified (phosphoserine). The residue at position 619 (Cys-619) is a Cysteine methyl ester. Cys-619 carries S-farnesyl cysteine lipidation. Residues 620–622 constitute a propeptide, removed in mature form; the sequence is AIM.

The protein belongs to the intermediate filament family. In terms of assembly, interacts directly with LBR. Interacts with MAN1. Interacts with Ote. In terms of processing, three forms of lamin have been identified in D.melanogaster, lamin Dm0 is rapidly processed to lamin Dm1 in the cytoplasm, Dm1 is then assembled in the nuclear envelope and is then phosphorylated, forming lamin Dm2. In terms of tissue distribution, constitutively expressed in all tissues (at protein level). Expressed in spermatocytes (at protein level).

Its subcellular location is the nucleus. The protein localises to the nucleus inner membrane. The protein resides in the nucleus envelope. It is found in the nucleus lamina. It localises to the cytoplasm. Its subcellular location is the cytoskeleton. The protein localises to the spindle pole. Its function is as follows. Lamins are components of the nuclear lamina, a fibrous layer on the nucleoplasmic side of the inner nuclear membrane, which is thought to provide a framework for the nuclear envelope and may also interact with chromatin. May have a role in the localization of the LEM domain proteins Ote, bocks and MAN1 to the nuclear membrane. In spermatocytes, plays a role in maintaining type-A lamin LamC nuclear localization; regulates meiotic cytokinesis by maintaining the structure of the spindle envelope, and by contributing to the formation of the contractile ring and central spindle. Required for nuclear migration and to link the microtubule organizing center (MTOC) to the nucleus. In addition, is required for nuclear envelope localization of klar. The sequence is that of Lamin Dm0 from Drosophila melanogaster (Fruit fly).